Reading from the N-terminus, the 209-residue chain is Orotate phosphoribosyltransferase (209 aa).

Residues Arg-96, Lys-100, His-102, and 122-130 (EDLISTGGS) contribute to the 5-phospho-alpha-D-ribose 1-diphosphate site. Ser-126 contacts orotate.

The protein belongs to the purine/pyrimidine phosphoribosyltransferase family. PyrE subfamily. Homodimer. The cofactor is Mg(2+).

It catalyses the reaction orotidine 5'-phosphate + diphosphate = orotate + 5-phospho-alpha-D-ribose 1-diphosphate. The protein operates within pyrimidine metabolism; UMP biosynthesis via de novo pathway; UMP from orotate: step 1/2. In terms of biological role, catalyzes the transfer of a ribosyl phosphate group from 5-phosphoribose 1-diphosphate to orotate, leading to the formation of orotidine monophosphate (OMP). The chain is Orotate phosphoribosyltransferase from Streptococcus mutans serotype c (strain ATCC 700610 / UA159).